The primary structure comprises 202 residues: Dephospho-CoA kinase (202 aa).

The DPCK domain maps to 3–202 (IFGLTGGIGS…ISHRSKYLSC (200 aa)). 11–16 (GSGKSL) is an ATP binding site.

The protein belongs to the CoaE family.

It is found in the cytoplasm. It catalyses the reaction 3'-dephospho-CoA + ATP = ADP + CoA + H(+). The protein operates within cofactor biosynthesis; coenzyme A biosynthesis; CoA from (R)-pantothenate: step 5/5. Catalyzes the phosphorylation of the 3'-hydroxyl group of dephosphocoenzyme A to form coenzyme A. The chain is Dephospho-CoA kinase from Ehrlichia chaffeensis (strain ATCC CRL-10679 / Arkansas).